The primary structure comprises 330 residues: Ketol-acid reductoisomerase (NADP(+)) (330 aa).

The region spanning 1-181 (MKVFYDSDFK…GLSRAGVIQT (181 aa)) is the KARI N-terminal Rossmann domain. NADP(+) contacts are provided by residues 24-27 (YGSQ), Arg47, Ser52, and 82-85 (DELQ). His107 is an active-site residue. Residue Gly133 coordinates NADP(+). The KARI C-terminal knotted domain maps to 182-327 (TFKEETETDL…AKLRKMCGLE (146 aa)). Mg(2+) contacts are provided by Asp190, Glu194, Glu226, and Glu230. Residue Ser251 coordinates substrate.

It belongs to the ketol-acid reductoisomerase family. Mg(2+) serves as cofactor.

It catalyses the reaction (2R)-2,3-dihydroxy-3-methylbutanoate + NADP(+) = (2S)-2-acetolactate + NADPH + H(+). The enzyme catalyses (2R,3R)-2,3-dihydroxy-3-methylpentanoate + NADP(+) = (S)-2-ethyl-2-hydroxy-3-oxobutanoate + NADPH + H(+). The protein operates within amino-acid biosynthesis; L-isoleucine biosynthesis; L-isoleucine from 2-oxobutanoate: step 2/4. It functions in the pathway amino-acid biosynthesis; L-valine biosynthesis; L-valine from pyruvate: step 2/4. Functionally, involved in the biosynthesis of branched-chain amino acids (BCAA). Catalyzes an alkyl-migration followed by a ketol-acid reduction of (S)-2-acetolactate (S2AL) to yield (R)-2,3-dihydroxy-isovalerate. In the isomerase reaction, S2AL is rearranged via a Mg-dependent methyl migration to produce 3-hydroxy-3-methyl-2-ketobutyrate (HMKB). In the reductase reaction, this 2-ketoacid undergoes a metal-dependent reduction by NADPH to yield (R)-2,3-dihydroxy-isovalerate. This is Ketol-acid reductoisomerase (NADP(+)) from Methanococcus maripaludis (strain C7 / ATCC BAA-1331).